Here is a 132-residue protein sequence, read N- to C-terminus: Dehydratase CTB10 (132 aa).

An EthD domain is found at 21–117 (PDQSEEDHHN…IPDHFNFADM (97 aa)).

It belongs to the tpcK family.

It functions in the pathway mycotoxin biosynthesis. Its function is as follows. Dehydratase; part of the gene cluster that mediates the biosynthesis of cercosporin, a light-activated, non-host-selective toxin. The perylenequinone chromophore of cercosporin absorbs light energy to attain an electronically-activated triplet state and produces active oxygen species such as the hydroxyl radical, superoxide, hydrogen peroxide or singlet oxygen upon reaction with oxygen molecules. These reactive oxygen species cause damage to various cellular components including lipids, proteins and nucleic acids. The first step of cercosporin biosynthesis is performed by the polyketide synthase CTB1 which catalyzes the formation of nor-toralactone. The starter unit acyltransferase (SAT) domain of CTB1 initiates polyketide extension by the selective utilization of acetyl-CoA, which is elongated to the heptaketide in the beta-ketoacyl synthase (KS) domain by successive condensations with six malonyl units introduced by the malonyl acyltransferase (MAT) domain. The product template (PT) domain catalyzes C4-C9 and C2-C11 aldol cyclizations and dehydrations to a trihydroxynaphthalene, which is thought to be delivered to the thioesterase (TE) domain for product release. The bifunctional enzyme CTB3 then methylates nor-toralactone to toralactone before conducting an unusual oxidative aromatic ring opening. The O-methyltransferase CTB2 further methylates the nascent OH-6 of the CBT3 product, blocking further oxidation at this site before the reductase CTB6 reduces the 2-oxopropyl ketone at position C7, giving naphthalene. The FAD-dependent monooxygenase CTB5 in concert with the multicopper oxidase CTB12 are responsible for homodimerization of naphthalene with CTB7 installing the dioxepine moiety, finally producing cercosporin. The fasciclin domain-containing protein CTB11 might act with CTB5 and CTB12 whereas the roles of CTB9 and CTB10 have still to be elucidated. In Cercospora beticola (Sugarbeet leaf spot fungus), this protein is Dehydratase CTB10.